The chain runs to 241 residues: 15,16-dihydrobiliverdin:ferredoxin oxidoreductase (241 aa).

The segment at arginine 16–serine 35 is disordered.

The protein belongs to the HY2 family.

It carries out the reaction 15,16-dihydrobiliverdin + oxidized 2[4Fe-4S]-[ferredoxin] = biliverdin IXalpha + reduced 2[4Fe-4S]-[ferredoxin] + 2 H(+). Functionally, catalyzes the two-electron reduction of biliverdin IX-alpha at the C15 methine bridge. This Synechococcus sp. (strain WH7803) protein is 15,16-dihydrobiliverdin:ferredoxin oxidoreductase.